The chain runs to 260 residues: Thrombin-like enzyme acutobin (260 aa).

Positions 1–18 are cleaved as a signal peptide; sequence MVLIRVLANLLILQLSYA. The propeptide occupies 19 to 24; the sequence is QKSSEL. One can recognise a Peptidase S1 domain in the interval 25 to 251; it reads VIGGVECDIN…YNDWIRSITA (227 aa). 6 cysteine pairs are disulfide-bonded: Cys31–Cys165, Cys52–Cys68, Cys102–Cys258, Cys144–Cys212, Cys176–Cys191, and Cys202–Cys227. His67 (charge relay system) is an active-site residue. N-linked (GlcNAc...) asparagine glycosylation is found at Asn101 and Asn105. Asp112 acts as the Charge relay system in catalysis. Asn124 carries an N-linked (GlcNAc...) asparagine glycan. Ser206 functions as the Charge relay system in the catalytic mechanism. Asn253 carries an N-linked (GlcNAc...) asparagine glycan.

Belongs to the peptidase S1 family. Snake venom subfamily. Monomer. In terms of processing, N-glycosylated. As to expression, expressed by the venom gland.

The protein resides in the secreted. In terms of biological role, thrombin-like snake venom serine protease that coagulates human fibrinogen by hydrolysis of the alpha chains (FGA). The protein is Thrombin-like enzyme acutobin of Deinagkistrodon acutus (Hundred-pace snake).